The following is a 138-amino-acid chain: Large ribosomal subunit protein uL16 (138 aa).

Residues 1–16 show a composition bias toward basic residues; the sequence is MLIPKRVKFRRQHRPN. Positions 1–25 are disordered; it reads MLIPKRVKFRRQHRPNRSGMSKGGN.

Belongs to the universal ribosomal protein uL16 family. Part of the 50S ribosomal subunit.

Its function is as follows. Binds 23S rRNA and is also seen to make contacts with the A and possibly P site tRNAs. The chain is Large ribosomal subunit protein uL16 from Corynebacterium urealyticum (strain ATCC 43042 / DSM 7109).